Consider the following 596-residue polypeptide: MFRPFRSEVEHAVESALQTLALPTDDLGVETPPEDVPATLASSVAFRLARSAKDSPPRVADDIAAAIDLEPDSQTYEYIDHVDTRGPYINFHVNDAYYMDTLTAAQDPGYGHLPNTGQSVVVEHTSANPTGPVHVGRGRNTIFGDAVARLLEYNGDTVDRHYYLNDAGRQVGVFTWAYEKFDADSLPDPERDRPDYDLVRYYRRGNEFLENADADAVESAEDEIASIINGLEAGNTETYERVQTVVDQVIDGMQHSFDRLSAIFDEFIKETRFIQNGDADAVVERLKSADCAVYEDDAWQIDLSAYDIEKNLVFLRSDGTTLYTTRDLAHHEWKFDNYDASVTILGEDHKLQAEQLDATLQILGNDTDQLRQPFYSWVNLPEGGMSTRKGTGVDLDDLLDEAIARAREEVHDRLGSRVRDDSLSSDDIDRIARQVGVGAVRYDIVSKQPTKGITFEWDRALDFEAQSAPYIQYVHARCCGIETEVNSNTDLDIDALTSDSIPDITMLRTDAERALLQEIARFPAVVESAAADLEPHVIATFARSFAEQFNTFYRECSVLNAESEIMTAARVSLVRAARHTVANALDIVGVEAPQSM.

Residues 127–137 (ANPTGPVHVGR) carry the 'HIGH' region motif.

It belongs to the class-I aminoacyl-tRNA synthetase family.

It is found in the cytoplasm. It carries out the reaction tRNA(Arg) + L-arginine + ATP = L-arginyl-tRNA(Arg) + AMP + diphosphate. This is Arginine--tRNA ligase from Haloquadratum walsbyi (strain DSM 16790 / HBSQ001).